The chain runs to 334 residues: ELMO domain-containing protein 1 (334 aa).

Positions 133–314 constitute an ELMO domain; sequence QHEEMLLKLW…KFRKRIIKQL (182 aa).

Its function is as follows. Acts as a GTPase-activating protein (GAP) toward guanine nucleotide exchange factors like ARL2, ARL3, ARF1 and ARF6, but not for GTPases outside the Arf family. This chain is ELMO domain-containing protein 1 (ELMOD1), found in Homo sapiens (Human).